The chain runs to 221 residues: NAD(P)H-hydrate epimerase (221 aa).

One can recognise a YjeF N-terminal domain in the interval 9–219 (MRELETAAVK…NIGLPKELLS (211 aa)). A (6S)-NADPHX-binding site is contributed by 60-64 (GNGGD). Residues asparagine 61 and aspartate 131 each contribute to the K(+) site. Residues 135 to 141 (GIGFKGE), tyrosine 146, and aspartate 164 contribute to the (6S)-NADPHX site. Serine 167 serves as a coordination point for K(+).

It belongs to the NnrE/AIBP family. K(+) is required as a cofactor.

It carries out the reaction (6R)-NADHX = (6S)-NADHX. The enzyme catalyses (6R)-NADPHX = (6S)-NADPHX. In terms of biological role, catalyzes the epimerization of the S- and R-forms of NAD(P)HX, a damaged form of NAD(P)H that is a result of enzymatic or heat-dependent hydration. This is a prerequisite for the S-specific NAD(P)H-hydrate dehydratase to allow the repair of both epimers of NAD(P)HX. This chain is NAD(P)H-hydrate epimerase, found in Elusimicrobium minutum (strain Pei191).